The primary structure comprises 327 residues: DNA-directed RNA polymerase subunit alpha (327 aa).

Positions 1–231 are alpha N-terminal domain (alpha-NTD); the sequence is MIYQMQMPAK…DHVTFFANFS (231 aa). The segment at 252-327 is alpha C-terminal domain (alpha-CTD); the sequence is MRRLFHTKIE…GMDITKYQMK (76 aa).

It belongs to the RNA polymerase alpha chain family. Homodimer. The RNAP catalytic core consists of 2 alpha, 1 beta, 1 beta' and 1 omega subunit. When a sigma factor is associated with the core the holoenzyme is formed, which can initiate transcription.

The enzyme catalyses RNA(n) + a ribonucleoside 5'-triphosphate = RNA(n+1) + diphosphate. DNA-dependent RNA polymerase catalyzes the transcription of DNA into RNA using the four ribonucleoside triphosphates as substrates. This is DNA-directed RNA polymerase subunit alpha from Pelodictyon phaeoclathratiforme (strain DSM 5477 / BU-1).